The chain runs to 168 residues: Large ribosomal subunit protein uL10 (168 aa).

The protein belongs to the universal ribosomal protein uL10 family. Part of the ribosomal stalk of the 50S ribosomal subunit. The N-terminus interacts with L11 and the large rRNA to form the base of the stalk. The C-terminus forms an elongated spine to which L12 dimers bind in a sequential fashion forming a multimeric L10(L12)X complex.

In terms of biological role, forms part of the ribosomal stalk, playing a central role in the interaction of the ribosome with GTP-bound translation factors. The sequence is that of Large ribosomal subunit protein uL10 from Acinetobacter baylyi (strain ATCC 33305 / BD413 / ADP1).